The chain runs to 396 residues: Calsequestrin-1 (396 aa).

The first 34 residues, 1 to 34 (MSATDRMGPRAVPGLRLALLLLLVLGTPKSGVQG), serve as a signal peptide directing secretion. Tyr43 carries the post-translational modification Phosphotyrosine. The residue at position 81 (Ser81) is a Phosphoserine. Thr124 carries the post-translational modification Phosphothreonine. Ser216 bears the Phosphoserine mark. Asn350 carries an N-linked (GlcNAc...) asparagine glycan.

Belongs to the calsequestrin family. Monomer; increases in response to a depletion of intracellular calcium. Homodimer. Homotetramer and homopolymer. Can form linear homooligomers. Ca(2+) ions promote oligomerization. Interacts (via C-terminal end and preferentially with the monomeric form) with STIM1; this interaction increases in response to a depletion of intracellular calcium, decreases both STIM1 aggregation and clustering, interaction of STIM1 with ORAI1 and store-operated Ca(2+) entry (SOCE) activity. Interacts with ASPH and TRDN. N-glycosylated. Expressed in myoblasts (at protein level).

Its subcellular location is the endoplasmic reticulum. It localises to the sarcoplasmic reticulum. The protein resides in the sarcoplasmic reticulum lumen. The protein localises to the sarcoplasmic reticulum membrane. It is found in the mitochondrion matrix. Functionally, calsequestrin is a high-capacity, moderate affinity, calcium-binding protein and thus acts as an internal calcium store in muscle. Calcium ions are bound by clusters of acidic residues at the protein surface, often at the interface between subunits. Can bind around 80 Ca(2+) ions. Regulates the release of lumenal Ca(2+) via the calcium release channel RYR1; this plays an important role in triggering muscle contraction. Negatively regulates store-operated Ca(2+) entry (SOCE) activity. This Homo sapiens (Human) protein is Calsequestrin-1 (CASQ1).